A 370-amino-acid chain; its full sequence is 3 beta-hydroxysteroid dehydrogenase/Delta 5--&gt;4-isomerase (370 aa).

Tyr-158 functions as the Proton acceptor in the catalytic mechanism. Lys-162 serves as a coordination point for NAD(+).

The protein belongs to the 3-beta-HSD family. Monomer.

The protein resides in the cytoplasm. It catalyses the reaction a 3beta-hydroxy-Delta(5)-steroid + NAD(+) = a 3-oxo-Delta(5)-steroid + NADH + H(+). The enzyme catalyses cholesterol + NAD(+) = cholest-5-en-3-one + NADH + H(+). It carries out the reaction pregnenolone + NAD(+) = pregn-5-ene-3,20-dione + NADH + H(+). The catalysed reaction is 3beta-hydroxyandrost-5-en-17-one + NAD(+) = androst-5-ene-3,17-dione + NADH + H(+). It catalyses the reaction a 3-oxo-Delta(5)-steroid = a 3-oxo-Delta(4)-steroid. The enzyme catalyses cholest-5-en-3-one = cholest-4-en-3-one. It carries out the reaction pregn-5-ene-3,20-dione = progesterone. The catalysed reaction is androst-5-ene-3,17-dione = androst-4-ene-3,17-dione. It functions in the pathway lipid metabolism; steroid biosynthesis. In terms of biological role, 3-beta-HSD is a bifunctional enzyme, that catalyzes the oxidation and isomerization of cholesterol, pregnenolone, and dehydroepiandrosterone (DHEA) into cholest-4-en-3-one, progesterone, and androsterone, respectively. This Mycobacterium tuberculosis (strain CDC 1551 / Oshkosh) protein is 3 beta-hydroxysteroid dehydrogenase/Delta 5--&gt;4-isomerase.